A 64-amino-acid polypeptide reads, in one-letter code: MKNLEIKRHYNLDYKNTNLLKKFVSVDGKILPKYITVLKPKNQRKLSKAIKLSRIAGLLKFLNN.

The protein belongs to the bacterial ribosomal protein bS18 family. As to quaternary structure, part of the 30S ribosomal subunit.

The protein localises to the plastid. The protein resides in the chloroplast. This chain is Small ribosomal subunit protein bS18c (rps18), found in Bigelowiella natans (Pedinomonas minutissima).